The following is a 288-amino-acid chain: MNNLSFSELCCLFCCPPCPGKIASKLAFLPPDPTYTLMCDESGSRWTLHLSERADWQYSSREKDAIECFMTRTSKGNRIACMFVRCSPNAKYTLLFSHGNAVDLGQMSSFYIGLGSRINCNIFSYDYSGYGASSGKPTEKNLYADIEAAWLALRTRYGIRPENVIIYGQSIGTVPSVDLAARYESAAVILHSPLTSGMRVAFPDTKKTYCFDAFPNIDKISKITSPVLIIHGTEDEVIDFSHGLALFERCQRPVEPLWVEGAGHNDVELYGQYLERLKQFVSQELVNL.

Catalysis depends on charge relay system residues Ser170, Asp235, and His264. Ser282 carries the post-translational modification Phosphoserine.

Belongs to the AB hydrolase superfamily. ABHD17 family. Post-translationally, palmitoylated on cysteine residues located in a cysteine cluster at the N-terminus which promotes membrane localization. Palmitoylation is required for post-synaptic localization and for depalmitoylating activity towards DLG4/PSD95.

It localises to the cell membrane. It is found in the recycling endosome membrane. The protein resides in the cell projection. Its subcellular location is the dendritic spine. The protein localises to the postsynaptic density membrane. It catalyses the reaction S-hexadecanoyl-L-cysteinyl-[protein] + H2O = L-cysteinyl-[protein] + hexadecanoate + H(+). With respect to regulation, inhibited by palmostatin-B. Functionally, hydrolyzes fatty acids from S-acylated cysteine residues in proteins. Has depalmitoylating activity towards DLG4/PSD95. Has depalmitoylating activity towards GAP43. Has depalmitoylating activity towards MAP6. Has depalmitoylating activity towards NRAS. This chain is Alpha/beta hydrolase domain-containing protein 17B, found in Homo sapiens (Human).